A 156-amino-acid polypeptide reads, in one-letter code: Arginine repressor (156 aa).

The protein belongs to the ArgR family.

The protein localises to the cytoplasm. It functions in the pathway amino-acid biosynthesis; L-arginine biosynthesis [regulation]. Functionally, regulates arginine biosynthesis genes. The protein is Arginine repressor of Photobacterium profundum (strain SS9).